Here is a 414-residue protein sequence, read N- to C-terminus: tRNA(Ile)-lysidine synthase (414 aa).

13–18 (SGGIDS) contributes to the ATP binding site.

The protein belongs to the tRNA(Ile)-lysidine synthase family.

It localises to the cytoplasm. It carries out the reaction cytidine(34) in tRNA(Ile2) + L-lysine + ATP = lysidine(34) in tRNA(Ile2) + AMP + diphosphate + H(+). In terms of biological role, ligates lysine onto the cytidine present at position 34 of the AUA codon-specific tRNA(Ile) that contains the anticodon CAU, in an ATP-dependent manner. Cytidine is converted to lysidine, thus changing the amino acid specificity of the tRNA from methionine to isoleucine. This chain is tRNA(Ile)-lysidine synthase, found in Thermotoga sp. (strain RQ2).